Here is a 363-residue protein sequence, read N- to C-terminus: Guanine nucleotide-binding protein alpha-11 subunit (363 aa).

In terms of domain architecture, G-alpha spans 26–363 (KMLKILLLGG…KISMEKVGFM (338 aa)). The G1 motif stretch occupies residues 29 to 42 (KILLLGGPECGKST). GTP contacts are provided by residues 34–41 (GGPECGKS), 172–178 (LRARVPT), 197–201 (DVGGQ), 276–279 (NKID), and alanine 335. Mg(2+) is bound by residues serine 41 and threonine 178. The interval 170–178 (DVLRARVPT) is G2 motif. The tract at residues 193 to 202 (LRMVDVGGQR) is G3 motif. The segment at 272–279 (ILFLNKID) is G4 motif. A G5 motif region spans residues 333-338 (TNATDT).

Belongs to the G-alpha family. In terms of assembly, g proteins are composed of 3 units; alpha, beta and gamma. The alpha chain contains the guanine nucleotide binding site. As to expression, expressed in ADL and ASH neurons.

In terms of biological role, guanine nucleotide-binding proteins (G proteins) are involved as modulators or transducers in various transmembrane signaling systems. Mediates the transduction of food and serotonin signals, which modulates the avoidance response to the odorant octanol. Has a role in lifespan to promote longevity. The protein is Guanine nucleotide-binding protein alpha-11 subunit (gpa-11) of Caenorhabditis elegans.